The following is a 141-amino-acid chain: Galactose-6-phosphate isomerase subunit LacA (141 aa).

This sequence belongs to the LacAB/RpiB family. Heteromultimeric protein consisting of LacA and LacB.

The catalysed reaction is aldehydo-D-galactose 6-phosphate = keto-D-tagatose 6-phosphate. Its pathway is carbohydrate metabolism; D-galactose 6-phosphate degradation; D-tagatose 6-phosphate from D-galactose 6-phosphate: step 1/1. This is Galactose-6-phosphate isomerase subunit LacA from Streptococcus pneumoniae (strain ATCC 700669 / Spain 23F-1).